Consider the following 705-residue polypeptide: Elongation factor G (705 aa).

One can recognise a tr-type G domain in the interval 8 to 290 (HRYRNIGIMA…GVIHLLPSPA (283 aa)). GTP is bound by residues 17–24 (AHIDAGKT), 88–92 (DTPGH), and 142–145 (NKMD).

It belongs to the TRAFAC class translation factor GTPase superfamily. Classic translation factor GTPase family. EF-G/EF-2 subfamily.

Its subcellular location is the cytoplasm. Functionally, catalyzes the GTP-dependent ribosomal translocation step during translation elongation. During this step, the ribosome changes from the pre-translocational (PRE) to the post-translocational (POST) state as the newly formed A-site-bound peptidyl-tRNA and P-site-bound deacylated tRNA move to the P and E sites, respectively. Catalyzes the coordinated movement of the two tRNA molecules, the mRNA and conformational changes in the ribosome. The polypeptide is Elongation factor G (Xylella fastidiosa (strain 9a5c)).